The sequence spans 981 residues: Ubiquitin carboxyl-terminal hydrolase 15 (981 aa).

Alanine 2 carries the post-translational modification N-acetylalanine. A mediates interaction with SART3 region spans residues 2-223 (AEGGAADLDT…KNEDGTWPRG (222 aa)). A DUSP domain is found at 7–118 (ADLDTQRSDI…GQEPIARKVV (112 aa)). Residues 216 to 237 (EDGTWPRGPSTPKSPGASNFST) are disordered. The residue at position 226 (threonine 226) is a Phosphothreonine. Polar residues predominate over residues 226-237 (TPKSPGASNFST). Phosphoserine is present on residues serine 229 and serine 242. The region spanning 289–933 (CGLSNLGNTC…AAYVLFYQRQ (645 aa)) is the USP domain. Catalysis depends on cysteine 298, which acts as the Nucleophile. Threonine 602 carries the phosphothreonine modification. The tract at residues 629–694 (GSLHCCKDQN…GGDNDSENGL (66 aa)) is disordered. Positions 656-673 (METDEPDDESSQDQELPS) are enriched in acidic residues. Histidine 891 functions as the Proton acceptor in the catalytic mechanism. Residues 952-981 (SAATGIPLESDEDSNDNDNDIENENCMHTN) form a disordered region. Over residues 960 to 974 (ESDEDSNDNDNDIEN) the composition is skewed to acidic residues. Phosphoserine occurs at positions 961 and 965.

It belongs to the peptidase C19 family. As to quaternary structure, a homodimer structure has been reported; however it is unclear whether the protein form a homodimer in vivo. Identified in a complex with the COP9 signalosome complex (CSN). Interacts with SMAD1, SMAD2 and SMAD3; the interaction is direct. Forms a complex with SMURF2 and SMAD7. Interacts with TGFBR1. Interacts with SART3; the interaction is direct. May interact with RNF20 and RNF40. May interact with PRKN. Interacts with INCA1. (Microbial infection) Interacts with human papillomavirus type 16 protein E6. Phosphorylated. Phosphorylation protects against ubiquitination and subsequent degradation by the proteasome. In terms of processing, ubiquitinated, leading to degradation by the proteasome. Expressed in skeletal muscle, kidney, heart, placenta, liver, thymus, lung, and ovary, with little or no expression in other tissues.

It localises to the cytoplasm. The protein resides in the nucleus. Its subcellular location is the mitochondrion. It carries out the reaction Thiol-dependent hydrolysis of ester, thioester, amide, peptide and isopeptide bonds formed by the C-terminal Gly of ubiquitin (a 76-residue protein attached to proteins as an intracellular targeting signal).. Hydrolase that removes conjugated ubiquitin from target proteins and regulates various pathways such as the TGF-beta receptor signaling, NF-kappa-B and RNF41/NRDP1-PRKN pathways. Acts as a key regulator of TGF-beta receptor signaling pathway, but the precise mechanism is still unclear: according to a report, acts by promoting deubiquitination of monoubiquitinated R-SMADs (SMAD1, SMAD2 and/or SMAD3), thereby alleviating inhibition of R-SMADs and promoting activation of TGF-beta target genes. According to another reports, regulates the TGF-beta receptor signaling pathway by mediating deubiquitination and stabilization of TGFBR1, leading to an enhanced TGF-beta signal. Able to mediate deubiquitination of monoubiquitinated substrates, 'Lys-27'-, 'Lys-48'- and 'Lys-63'-linked polyubiquitin chains. May also regulate gene expression and/or DNA repair through the deubiquitination of histone H2B. Acts as an inhibitor of mitophagy by counteracting the action of parkin (PRKN): hydrolyzes cleavage of 'Lys-48'- and 'Lys-63'-linked polyubiquitin chains attached by parkin on target proteins such as MFN2, thereby reducing parkin's ability to drive mitophagy. Acts as an associated component of COP9 signalosome complex (CSN) and regulates different pathways via this association: regulates NF-kappa-B by mediating deubiquitination of NFKBIA and deubiquitinates substrates bound to VCP. Involved in endosome organization by mediating deubiquitination of SQSTM1: ubiquitinated SQSTM1 forms a molecular bridge that restrains cognate vesicles in the perinuclear region and its deubiquitination releases target vesicles for fast transport into the cell periphery. Acts as a negative regulator of antifungal immunity by mediating 'Lys-27'-linked deubiquitination of CARD9, thereby inactivating CARD9. Its function is as follows. (Microbial infection) Protects APC and human papillomavirus type 16 protein E6 against degradation via the ubiquitin proteasome pathway. The sequence is that of Ubiquitin carboxyl-terminal hydrolase 15 from Homo sapiens (Human).